Reading from the N-terminus, the 279-residue chain is Pantothenate synthetase (279 aa).

Residue 26 to 33 (MGNLHDGH) coordinates ATP. Histidine 33 (proton donor) is an active-site residue. Glutamine 57 is a (R)-pantoate binding site. Residue glutamine 57 participates in beta-alanine binding. Residue 144-147 (GKKD) participates in ATP binding. (R)-pantoate is bound at residue glutamine 150. 181 to 184 (LSSR) lines the ATP pocket.

It belongs to the pantothenate synthetase family. In terms of assembly, homodimer.

The protein localises to the cytoplasm. It catalyses the reaction (R)-pantoate + beta-alanine + ATP = (R)-pantothenate + AMP + diphosphate + H(+). It participates in cofactor biosynthesis; (R)-pantothenate biosynthesis; (R)-pantothenate from (R)-pantoate and beta-alanine: step 1/1. Functionally, catalyzes the condensation of pantoate with beta-alanine in an ATP-dependent reaction via a pantoyl-adenylate intermediate. The chain is Pantothenate synthetase from Janthinobacterium sp. (strain Marseille) (Minibacterium massiliensis).